A 198-amino-acid chain; its full sequence is Glycerol-3-phosphate acyltransferase (198 aa).

5 consecutive transmembrane segments (helical) span residues 10-30 (LIPILFASYLIGSIPFSWILV), 57-77 (GISFLVLLLDIFKSVLVILIL), 86-106 (IMYLTGFTVVLGHIFPVWFLF), 118-138 (VVLSINIKIFFLFIITWAVVF), and 160-180 (AVTENFNSSIFYIAMSIIVLI).

It belongs to the PlsY family. As to quaternary structure, probably interacts with PlsX.

The protein localises to the cell inner membrane. The enzyme catalyses an acyl phosphate + sn-glycerol 3-phosphate = a 1-acyl-sn-glycero-3-phosphate + phosphate. It functions in the pathway lipid metabolism; phospholipid metabolism. Functionally, catalyzes the transfer of an acyl group from acyl-phosphate (acyl-PO(4)) to glycerol-3-phosphate (G3P) to form lysophosphatidic acid (LPA). This enzyme utilizes acyl-phosphate as fatty acyl donor, but not acyl-CoA or acyl-ACP. This chain is Glycerol-3-phosphate acyltransferase, found in Anaplasma marginale (strain Florida).